Reading from the N-terminus, the 64-residue chain is p7b (64 aa).

The Cytoplasmic portion of the chain corresponds to Met1–Gln12. A helical; Signal-anchor for type II membrane protein membrane pass occupies residues Trp13 to Leu30. Over Thr31 to Lys64 the chain is Lumenal.

Belongs to the gammacarmovirus double gene block protein 2 family.

The protein localises to the host endoplasmic reticulum membrane. Its function is as follows. Required for cell-to-cell movement of virions in the host plant together with p7a. The sequence is that of p7b from Maize chlorotic mottle virus (isolate United States/Kansas/1987) (MCMV).